We begin with the raw amino-acid sequence, 297 residues long: MRDETGETQDLEAEEIHPLFHGAPGSTEFRKLRKRLVRETRAAIETYDMIRPGDRWLVCLSGGKDSYTLLAVLHELKWRGLLPVELLACNLDQGQPGFPATVLPEFLTQRQVPHRIEYQDTYSIVKEKVPEGRTYCSLCSRLRRGNLYRIAREEGCQAVVLGHHRDDILETFFMNLFHGGRLASMPPKLLNEEGDLNVLRPLAFVAEADCDRFARAMNYPVIPCDLCGSQEGLQRMQVKRLLDEWESRSPGRRRVMFRALMNVRPSHLPDPKLFDFTALMPDMSDFREKDVPILREH.

The short motif at 61 to 66 is the PP-loop motif element; sequence SGGKDS. [4Fe-4S] cluster contacts are provided by cysteine 136, cysteine 139, and cysteine 227.

This sequence belongs to the TtcA family. In terms of assembly, homodimer. It depends on Mg(2+) as a cofactor. [4Fe-4S] cluster is required as a cofactor.

The protein localises to the cytoplasm. The catalysed reaction is cytidine(32) in tRNA + S-sulfanyl-L-cysteinyl-[cysteine desulfurase] + AH2 + ATP = 2-thiocytidine(32) in tRNA + L-cysteinyl-[cysteine desulfurase] + A + AMP + diphosphate + H(+). Its pathway is tRNA modification. In terms of biological role, catalyzes the ATP-dependent 2-thiolation of cytidine in position 32 of tRNA, to form 2-thiocytidine (s(2)C32). The sulfur atoms are provided by the cysteine/cysteine desulfurase (IscS) system. In Paracoccus denitrificans (strain Pd 1222), this protein is tRNA-cytidine(32) 2-sulfurtransferase.